The following is a 32-amino-acid chain: Fibrinolytic enzyme (32 aa).

In terms of processing, the N-terminus is blocked.

Inhibited by phenylmethanesulfonyl fluoride (PMSF). Not inhibited by EDTA, EGTA, beta-mercaptoethanol, indoacetamide, benzamidine, aprotinin, pepstatin A and trypsin inhibitor. Its function is as follows. Plasmin-like serine protease. Has fibrinolytic and fibrinogenolytic but not plasminogenolytic activity. Cleaves after Arg and Lys residues. The chain is Fibrinolytic enzyme from Hediste japonica (Polychaete worm).